Here is a 156-residue protein sequence, read N- to C-terminus: Crossover junction endodeoxyribonuclease RuvC (156 aa).

Catalysis depends on residues Asp7, Glu67, and Asp139. The Mg(2+) site is built by Asp7, Glu67, and Asp139.

It belongs to the RuvC family. Homodimer which binds Holliday junction (HJ) DNA. The HJ becomes 2-fold symmetrical on binding to RuvC with unstacked arms; it has a different conformation from HJ DNA in complex with RuvA. In the full resolvosome a probable DNA-RuvA(4)-RuvB(12)-RuvC(2) complex forms which resolves the HJ. Requires Mg(2+) as cofactor.

It localises to the cytoplasm. It catalyses the reaction Endonucleolytic cleavage at a junction such as a reciprocal single-stranded crossover between two homologous DNA duplexes (Holliday junction).. The RuvA-RuvB-RuvC complex processes Holliday junction (HJ) DNA during genetic recombination and DNA repair. Endonuclease that resolves HJ intermediates. Cleaves cruciform DNA by making single-stranded nicks across the HJ at symmetrical positions within the homologous arms, yielding a 5'-phosphate and a 3'-hydroxyl group; requires a central core of homology in the junction. The consensus cleavage sequence is 5'-(A/T)TT(C/G)-3'. Cleavage occurs on the 3'-side of the TT dinucleotide at the point of strand exchange. HJ branch migration catalyzed by RuvA-RuvB allows RuvC to scan DNA until it finds its consensus sequence, where it cleaves and resolves the cruciform DNA. In Sphingopyxis alaskensis (strain DSM 13593 / LMG 18877 / RB2256) (Sphingomonas alaskensis), this protein is Crossover junction endodeoxyribonuclease RuvC.